The primary structure comprises 515 residues: Maturase K (515 aa).

This sequence belongs to the intron maturase 2 family. MatK subfamily.

Its subcellular location is the plastid. The protein localises to the chloroplast. Its function is as follows. Usually encoded in the trnK tRNA gene intron. Probably assists in splicing its own and other chloroplast group II introns. In Pinus elliottii (Slash pine), this protein is Maturase K.